The sequence spans 352 residues: 3'(2'),5'-bisphosphate nucleotidase (352 aa).

The Proton acceptor role is filled by Asp-45. The Mg(2+) site is built by Glu-68, Asp-133, Ile-135, and Asp-136. The active-site Proton acceptor is Thr-138. Residues Thr-138, His-240, Ser-264, Lys-267, Arg-281, and Asp-294 each coordinate adenosine 3',5'-bisphosphate. AMP contacts are provided by His-240, Ser-264, Lys-267, Arg-281, and Asp-294. Asp-294 lines the Mg(2+) pocket.

This sequence belongs to the inositol monophosphatase superfamily. Requires Mg(2+) as cofactor.

It carries out the reaction 3'-phosphoadenylyl sulfate + H2O = adenosine 5'-phosphosulfate + phosphate. The catalysed reaction is adenosine 3',5'-bisphosphate + H2O = AMP + phosphate. The enzyme catalyses adenosine 2',5'-bisphosphate + H2O = AMP + phosphate. Its function is as follows. Phosphatase that converts adenosine 3'-phosphate 5'-phosphosulfate (PAPS) to adenosine 5'-phosphosulfate (APS) and 3'(2')-phosphoadenosine 5'-phosphate (PAP) to AMP. May regulate the flux of sulfur in the sulfur-activation pathway by converting PAPS to APS. Involved in osmoadaptation. The sequence is that of 3'(2'),5'-bisphosphate nucleotidase from Emericella nidulans (strain FGSC A4 / ATCC 38163 / CBS 112.46 / NRRL 194 / M139) (Aspergillus nidulans).